A 110-amino-acid polypeptide reads, in one-letter code: uncharacterized protein (110 aa).

It is found in the plastid. The protein localises to the chloroplast. This is an uncharacterized protein from Auxenochlorella pyrenoidosa (Freshwater green alga).